Reading from the N-terminus, the 165-residue chain is Peptide methionine sulfoxide reductase MsrA (165 aa).

Cys10 is a catalytic residue.

This sequence belongs to the MsrA Met sulfoxide reductase family.

The catalysed reaction is L-methionyl-[protein] + [thioredoxin]-disulfide + H2O = L-methionyl-(S)-S-oxide-[protein] + [thioredoxin]-dithiol. It carries out the reaction [thioredoxin]-disulfide + L-methionine + H2O = L-methionine (S)-S-oxide + [thioredoxin]-dithiol. Has an important function as a repair enzyme for proteins that have been inactivated by oxidation. Catalyzes the reversible oxidation-reduction of methionine sulfoxide in proteins to methionine. The polypeptide is Peptide methionine sulfoxide reductase MsrA (Campylobacter jejuni subsp. jejuni serotype O:6 (strain 81116 / NCTC 11828)).